The sequence spans 33 residues: uncharacterized protein (33 aa).

This is an uncharacterized protein from Archaeoglobus fulgidus (strain ATCC 49558 / DSM 4304 / JCM 9628 / NBRC 100126 / VC-16).